The sequence spans 438 residues: Histidine--tRNA ligase (438 aa).

This sequence belongs to the class-II aminoacyl-tRNA synthetase family. Homodimer.

It is found in the cytoplasm. The catalysed reaction is tRNA(His) + L-histidine + ATP = L-histidyl-tRNA(His) + AMP + diphosphate + H(+). This chain is Histidine--tRNA ligase, found in Aromatoleum aromaticum (strain DSM 19018 / LMG 30748 / EbN1) (Azoarcus sp. (strain EbN1)).